A 261-amino-acid chain; its full sequence is N-acetyltransferase ECO1 (261 aa).

The segment at 29–53 adopts a CCHH-type zinc-finger fold; the sequence is LKCPKCEMKYSPNSIDDVATHKKYH. The region spanning 102–261 is the N-acetyltransferase domain; that stretch reads VMIQENKPAE…SGHILIPCYL (160 aa).

Belongs to the acetyltransferase family. ECO subfamily.

Its subcellular location is the nucleus. Its function is as follows. Probable acetyltransferase required for the establishment of sister chromatid cohesion and couple the processes of cohesion and DNA replication to ensure that only sister chromatids become paired together. In contrast to the structural cohesins, the deposition and establishment factors are required only during S phase. Acts by acetylating the cohesin complex component SMC3. The chain is N-acetyltransferase ECO1 (ECO1) from Candida glabrata (strain ATCC 2001 / BCRC 20586 / JCM 3761 / NBRC 0622 / NRRL Y-65 / CBS 138) (Yeast).